Here is a 580-residue protein sequence, read N- to C-terminus: Cis-3-hydroxy-L-proline dehydratase (580 aa).

The active-site Proton acceptor is the serine 66.

The protein belongs to the AcnX family. In terms of assembly, monomer. It depends on Fe(3+) as a cofactor.

The catalysed reaction is cis-3-hydroxy-L-proline = 1-pyrroline-2-carboxylate + H2O. Its activity is regulated as follows. Inhibited by Zn(2+), Cd(2+) and Hg(2+), but not by Co(2+), Ni(2+), Mn(2+), Sr(2+), Mg(2+), or Fe(3+). Inhibited by pyrrole-2-carboxylate and its derivative 2-thiophenecarboxylate, but not by trans-aconitate, fluorocitrate and oxalomalate, which are typical inhibitors of the aconitase enzymes. Functionally, catalyzes the dehydration of cis-3-hydroxy-L-proline (c3LHyp) to Delta(1)-pyrroline-2-carboxylate (Pyr2C). Also has activity with (2S,3S,4R)-3,4-dihydroxyproline as substrate, albeit at about 300-fold lower rate. No activity with L-proline, trans-4-hydroxy-L-proline (t4LHyp), cis-4-hydroxy-L-proline (c4LHyp), trans-3-hydroxy-L-proline (t3LHyp), D-proline, cis-4-hydroxy-D-proline (c4DHyp), trans-4-hydroxy-D-proline (t4DHyp) or L-serine as substrates. No hydro-lyase activity with citrate or cis-acotinate. Does not catalyze 2-epimerization of c3LHyp to trans-3-hydroxy-D-proline (t3DHyp). Involved in a degradation pathway that converts c3LHyp to L-proline, which would allow P.aeruginosa to grow on c3LHyp as a sole carbon source. This chain is Cis-3-hydroxy-L-proline dehydratase, found in Pseudomonas aeruginosa (strain ATCC 15692 / DSM 22644 / CIP 104116 / JCM 14847 / LMG 12228 / 1C / PRS 101 / PAO1).